The primary structure comprises 270 residues: Dermonecrotic toxin LsaSicTox-alphaIB1av (270 aa).

Residue His2 is part of the active site. Mg(2+)-binding residues include Glu22 and Asp24. His38 functions as the Nucleophile in the catalytic mechanism. 2 disulfide bridges follow: Cys42/Cys48 and Cys44/Cys187. Asp82 lines the Mg(2+) pocket.

It belongs to the arthropod phospholipase D family. Class II subfamily. Mg(2+) is required as a cofactor. Expressed by the venom gland.

The protein resides in the secreted. It carries out the reaction an N-(acyl)-sphingosylphosphocholine = an N-(acyl)-sphingosyl-1,3-cyclic phosphate + choline. It catalyses the reaction an N-(acyl)-sphingosylphosphoethanolamine = an N-(acyl)-sphingosyl-1,3-cyclic phosphate + ethanolamine. The catalysed reaction is a 1-acyl-sn-glycero-3-phosphocholine = a 1-acyl-sn-glycero-2,3-cyclic phosphate + choline. The enzyme catalyses a 1-acyl-sn-glycero-3-phosphoethanolamine = a 1-acyl-sn-glycero-2,3-cyclic phosphate + ethanolamine. Functionally, dermonecrotic toxins cleave the phosphodiester linkage between the phosphate and headgroup of certain phospholipids (sphingolipid and lysolipid substrates), forming an alcohol (often choline) and a cyclic phosphate. This toxin acts on sphingomyelin (SM). It may also act on ceramide phosphoethanolamine (CPE), lysophosphatidylcholine (LPC) and lysophosphatidylethanolamine (LPE), but not on lysophosphatidylserine (LPS), and lysophosphatidylglycerol (LPG). It acts by transphosphatidylation, releasing exclusively cyclic phosphate products as second products. Induces dermonecrosis, hemolysis, increased vascular permeability, edema, inflammatory response, and platelet aggregation. This chain is Dermonecrotic toxin LsaSicTox-alphaIB1av, found in Loxosceles sabina (Tucson recluse spider).